A 132-amino-acid chain; its full sequence is Small ribosomal subunit protein uS8 (132 aa).

This sequence belongs to the universal ribosomal protein uS8 family. As to quaternary structure, part of the 30S ribosomal subunit. Contacts proteins S5 and S12.

Its function is as follows. One of the primary rRNA binding proteins, it binds directly to 16S rRNA central domain where it helps coordinate assembly of the platform of the 30S subunit. This Stenotrophomonas maltophilia (strain R551-3) protein is Small ribosomal subunit protein uS8.